We begin with the raw amino-acid sequence, 527 residues long: Probable T-complex protein 1 subunit beta (527 aa).

It belongs to the TCP-1 chaperonin family. As to quaternary structure, heterooligomeric complex of about 850 to 900 kDa that forms two stacked rings, 12 to 16 nm in diameter.

Its subcellular location is the cytoplasm. Its function is as follows. Molecular chaperone; assists the folding of proteins upon ATP hydrolysis. Known to play a role, in vitro, in the folding of actin and tubulin. This is Probable T-complex protein 1 subunit beta (cct2) from Schizosaccharomyces pombe (strain 972 / ATCC 24843) (Fission yeast).